The following is a 188-amino-acid chain: Acireductone dioxygenase 1 (188 aa).

Positions 90, 92, 96, and 135 each coordinate Fe(2+). 4 residues coordinate Ni(2+): H90, H92, E96, and H135.

The protein belongs to the acireductone dioxygenase (ARD) family. The cofactor is Fe(2+). Ni(2+) serves as cofactor.

It is found in the cytoplasm. The protein localises to the nucleus. The catalysed reaction is 1,2-dihydroxy-5-(methylsulfanyl)pent-1-en-3-one + O2 = 4-methylsulfanyl-2-oxobutanoate + formate + 2 H(+). It catalyses the reaction 1,2-dihydroxy-5-(methylsulfanyl)pent-1-en-3-one + O2 = 3-(methylsulfanyl)propanoate + CO + formate + 2 H(+). It functions in the pathway amino-acid biosynthesis; L-methionine biosynthesis via salvage pathway; L-methionine from S-methyl-5-thio-alpha-D-ribose 1-phosphate: step 5/6. Catalyzes 2 different reactions between oxygen and the acireductone 1,2-dihydroxy-3-keto-5-methylthiopentene (DHK-MTPene) depending upon the metal bound in the active site. Fe-containing acireductone dioxygenase (Fe-ARD) produces formate and 2-keto-4-methylthiobutyrate (KMTB), the alpha-ketoacid precursor of methionine in the methionine recycle pathway. Ni-containing acireductone dioxygenase (Ni-ARD) produces methylthiopropionate, carbon monoxide and formate, and does not lie on the methionine recycle pathway. The chain is Acireductone dioxygenase 1 from Vitis vinifera (Grape).